The chain runs to 385 residues: tRNA-specific 2-thiouridylase MnmA (385 aa).

ATP-binding positions include 12 to 19 and Met38; that span reads GLSGGVDS. Residues 108–110 form an interaction with target base in tRNA region; that stretch reads NPD. Cys113 (nucleophile) is an active-site residue. An intrachain disulfide couples Cys113 to Cys210. ATP is bound at residue Gly138. The tract at residues 160 to 162 is interaction with tRNA; that stretch reads KDQ. Cys210 functions as the Cysteine persulfide intermediate in the catalytic mechanism.

This sequence belongs to the MnmA/TRMU family.

It localises to the cytoplasm. It catalyses the reaction S-sulfanyl-L-cysteinyl-[protein] + uridine(34) in tRNA + AH2 + ATP = 2-thiouridine(34) in tRNA + L-cysteinyl-[protein] + A + AMP + diphosphate + H(+). Catalyzes the 2-thiolation of uridine at the wobble position (U34) of tRNA, leading to the formation of s(2)U34. The polypeptide is tRNA-specific 2-thiouridylase MnmA (Ureaplasma parvum serovar 3 (strain ATCC 27815 / 27 / NCTC 11736)).